The sequence spans 261 residues: Small ribosomal subunit protein uS2 (261 aa).

Residues 224–261 form a disordered region; the sequence is GKQGQDDSEDVEKEMADKAAAENDDEESIEEVVEKSED. Residues 245–254 are compositionally biased toward acidic residues; that stretch reads ENDDEESIEE.

Belongs to the universal ribosomal protein uS2 family.

The chain is Small ribosomal subunit protein uS2 from Lactobacillus gasseri (strain ATCC 33323 / DSM 20243 / BCRC 14619 / CIP 102991 / JCM 1131 / KCTC 3163 / NCIMB 11718 / NCTC 13722 / AM63).